Consider the following 281-residue polypeptide: Diaminopimelate epimerase (281 aa).

Positions 13, 46, and 66 each coordinate substrate. The Proton donor role is filled by C75. Residues 76 to 77, N160, N193, and 211 to 212 each bind substrate; these read GN and ER. The active-site Proton acceptor is C220. 221 to 222 is a substrate binding site; sequence GT.

This sequence belongs to the diaminopimelate epimerase family. Homodimer.

The protein resides in the cytoplasm. The catalysed reaction is (2S,6S)-2,6-diaminopimelate = meso-2,6-diaminopimelate. It functions in the pathway amino-acid biosynthesis; L-lysine biosynthesis via DAP pathway; DL-2,6-diaminopimelate from LL-2,6-diaminopimelate: step 1/1. In terms of biological role, catalyzes the stereoinversion of LL-2,6-diaminopimelate (L,L-DAP) to meso-diaminopimelate (meso-DAP), a precursor of L-lysine and an essential component of the bacterial peptidoglycan. The polypeptide is Diaminopimelate epimerase (Acinetobacter baumannii (strain ATCC 17978 / DSM 105126 / CIP 53.77 / LMG 1025 / NCDC KC755 / 5377)).